The following is a 199-amino-acid chain: NAD(P)H dehydrogenase (quinone) (199 aa).

The Flavodoxin-like domain maps to 4–190 (VLVLYYSAYG…AGARYQGKTI (187 aa)). FMN-binding positions include 10 to 15 (SAYGHI) and 78 to 80 (TRF). Residue Tyr12 participates in NAD(+) binding. Trp98 is a binding site for substrate. FMN is bound by residues 113–119 (STATQHG) and His134.

This sequence belongs to the WrbA family. FMN is required as a cofactor.

It carries out the reaction a quinone + NADH + H(+) = a quinol + NAD(+). The enzyme catalyses a quinone + NADPH + H(+) = a quinol + NADP(+). This is NAD(P)H dehydrogenase (quinone) from Rhodopseudomonas palustris (strain HaA2).